The following is an 89-amino-acid chain: uncharacterized protein (89 aa).

Positions 31–89 (TPQPLEPHEHPKPMEPNEFDPKPDDPPRNPDPSPFPNEVPKPKPSDFPIPDELYPQPIV) are disordered. Over residues 36–58 (EPHEHPKPMEPNEFDPKPDDPPR) the composition is skewed to basic and acidic residues. Over residues 59 to 69 (NPDPSPFPNEV) the composition is skewed to pro residues.

This is an uncharacterized protein from Dictyostelium discoideum (Social amoeba).